The sequence spans 496 residues: Omega-crystallin (496 aa).

This sequence belongs to the aldehyde dehydrogenase family. Lens.

Its function is as follows. Omega-crystallins are structural components of squids and octopi eye lens. Contains relatively little if any DHAL activity. In Enteroctopus dofleini (North Pacific giant octopus), this protein is Omega-crystallin.